The chain runs to 33 residues: Neutrophil defensin 1 (33 aa).

3 disulfides stabilise this stretch: Cys-3–Cys-31, Cys-5–Cys-20, and Cys-10–Cys-30.

It belongs to the alpha-defensin family.

The protein localises to the secreted. Functionally, anti-fungal and bactericidal activity, greater against Gram-positive bacteria. This is Neutrophil defensin 1 from Mesocricetus auratus (Golden hamster).